Reading from the N-terminus, the 187-residue chain is Glutathione peroxidase 7 (187 aa).

The first 19 residues, 1–19 (MVAATVAAAWLLLWAAACA), serve as a signal peptide directing secretion. Cysteine 57 is an active-site residue.

It belongs to the glutathione peroxidase family. Expressed in esophageal epithelial cells; expression is up-regulated after exposure to acidic bile acids.

It is found in the secreted. It carries out the reaction 2 glutathione + H2O2 = glutathione disulfide + 2 H2O. It protects esophageal epithelia from hydrogen peroxide-induced oxidative stress. It suppresses acidic bile acid-induced reactive oxygen species (ROS) and protects against oxidative DNA damage and double-strand breaks. The protein is Glutathione peroxidase 7 (GPX7) of Homo sapiens (Human).